A 249-amino-acid polypeptide reads, in one-letter code: 2,3-bisphosphoglycerate-dependent phosphoglycerate mutase (249 aa).

Substrate contacts are provided by residues 9–16 (RHGQSQWN), 22–23 (TG), Arg-61, 88–91 (ERHY), Lys-99, 115–116 (RR), and 184–185 (GN). Residue His-10 is the Tele-phosphohistidine intermediate of the active site. The active-site Proton donor/acceptor is the Glu-88.

The protein belongs to the phosphoglycerate mutase family. BPG-dependent PGAM subfamily. Homodimer.

The enzyme catalyses (2R)-2-phosphoglycerate = (2R)-3-phosphoglycerate. The protein operates within carbohydrate degradation; glycolysis; pyruvate from D-glyceraldehyde 3-phosphate: step 3/5. Catalyzes the interconversion of 2-phosphoglycerate and 3-phosphoglycerate. The sequence is that of 2,3-bisphosphoglycerate-dependent phosphoglycerate mutase from Xanthomonas euvesicatoria pv. vesicatoria (strain 85-10) (Xanthomonas campestris pv. vesicatoria).